Here is a 93-residue protein sequence, read N- to C-terminus: DNA-directed RNA polymerase subunit Rpo11 (93 aa).

It belongs to the archaeal Rpo11/eukaryotic RPB11/RPC19 RNA polymerase subunit family. In terms of assembly, part of the RNA polymerase complex.

The protein localises to the cytoplasm. It carries out the reaction RNA(n) + a ribonucleoside 5'-triphosphate = RNA(n+1) + diphosphate. DNA-dependent RNA polymerase (RNAP) catalyzes the transcription of DNA into RNA using the four ribonucleoside triphosphates as substrates. This chain is DNA-directed RNA polymerase subunit Rpo11, found in Methanocella arvoryzae (strain DSM 22066 / NBRC 105507 / MRE50).